The following is a 345-amino-acid chain: MLTMRICLRATYTQKEYKWESTVNEQISAASLYDRVARVIPKAEWMGFQDDVEAILELKRKRNAVILAHNYQTPEIFHGVADIVGDSLALARKAMEVEADVIVLAGVHFMAETAKLLNPEKTVLIPDMAAGCSLADSITPEDIALLRKAYPGVPVVTYVNTSAAVKAASDICCTSGNARQVVESLGVPRVLMLPDEYLAKNVAKETSVELIAWRGHCEVHELFTADDIRELRESHPGVIVLAHPECPPEVVDAADFSGSTAVMSDYVGRERPARVVLLTECSMSDNVAVHHPDVEFIRPCNLCPHMKRITLGNIRTALEENRHEVTVDPAIAGAARRAVERMLQI.

Iminosuccinate is bound by residues H69 and S87. Residue C132 coordinates [4Fe-4S] cluster. Residues 158-160 (YVN) and S175 each bind iminosuccinate. C217 contributes to the [4Fe-4S] cluster binding site. Iminosuccinate contacts are provided by residues 243–245 (HPE) and T260. C303 serves as a coordination point for [4Fe-4S] cluster.

This sequence belongs to the quinolinate synthase family. Type 2 subfamily. The cofactor is [4Fe-4S] cluster.

It is found in the cytoplasm. The catalysed reaction is iminosuccinate + dihydroxyacetone phosphate = quinolinate + phosphate + 2 H2O + H(+). It functions in the pathway cofactor biosynthesis; NAD(+) biosynthesis; quinolinate from iminoaspartate: step 1/1. Functionally, catalyzes the condensation of iminoaspartate with dihydroxyacetone phosphate to form quinolinate. The polypeptide is Quinolinate synthase (Agrobacterium fabrum (strain C58 / ATCC 33970) (Agrobacterium tumefaciens (strain C58))).